The following is a 213-amino-acid chain: Amelogenin, X isoform (213 aa).

The signal sequence occupies residues 1 to 16 (MGTWILFACLLGAAFS). The residue at position 32 (S32) is a Phosphoserine. Composition is skewed to low complexity over residues 96-105 (VPQQPMMPVP) and 114-160 (QHHQ…QPLQ). Residues 96–213 (VPQQPMMPVP…TDKTKREEVD (118 aa)) form a disordered region. Positions 161–194 (PLQPQPPVHPIQPLPPQPPLPPIFPMQPLPPMLP) are enriched in pro residues.

The protein belongs to the amelogenin family. Interacts with KRT5. In terms of processing, phosphorylated by FAM20C in vitro.

The protein resides in the secreted. It localises to the extracellular space. Its subcellular location is the extracellular matrix. Its function is as follows. Plays a role in the biomineralization of teeth. Seems to regulate the formation of crystallites during the secretory stage of tooth enamel development. Thought to play a major role in the structural organization and mineralization of developing enamel. This chain is Amelogenin, X isoform (AMELX), found in Bos taurus (Bovine).